A 2485-amino-acid polypeptide reads, in one-letter code: MYLEKYQEDDIAIIGVGLRLPGEESGGGVVGELLNDSPQNFWNNLKKGFNGISKTNERWSENYSKLGEISNGYAGVLPLEELKSFDPLFFGISPSEASTIDPQQRLLLKTTWESLEDAGIDHQSIRGSDCSVFIGSSTTEYRESIVNINEQYLNIFGTYAHGIANRISYCFDLRGESVTLDTACASSGTAISMGAQCIKNGKSKLSIVGGVNLIVDTTNIKAFSYLNMLSTSGVCRPFDIGADGLLRGEGVGTIVLKSLKDSIRDGNKIYCIIKGSSYNVDGNGNSDKQNFYAPSSISQSDNIKLAIKSTNGSITCDDIDYFECHGTGTPTGDPIETKGISMAFNRSKQNPLLIGSLKGSSGHSEAASGVIGVIKCCLIFKNKSLVPCVNFSKPNPQIKFEEWNLKVVTEPIPFTSLPSRKLNNKPISIAINNFGVTGANCCIILSEFINNNTNDNLKQINKSFLIPFSANSVKSLENYKLKLNSIINENDYYLNNSAIFNGFVNNQIYNKSKSLSQRSVYVASNLNELVDGKVNFKTSNSKSSNFSILKKKPIVLFVFSGQGSQYNTMFDQLYNDEIIFKESIDRIDNSLFKYYGYSVFEKFKSSNLNSIHEPLIAQAAISMLNISLFELYKHWGIEASFIVGHSLGEISAAHCSGMIDLETLCYIIYHRSIAQIKTHGNGRMLSINQSSDEYISKYSSKYADLEIACYNSQNSIVVAGNEHKLNQLFNELKENNEFATMIASQSSFHTSNQCITKDDIFKLQFTANLPLIPIFSTVTTNLFDNSTLFNSSYIYDNIICPVRFEQTISNFYKHIDDDNDKSDVEVVIIELAPHPTLSYYLKQMKPVIENKDIKVNVYSALHKLKNSTKEFQKVISQLYCDNGININFKCQLENQVNMYDTIFSLPNYQWDDQKYWKVDYTHSRSYINGPPITILGNESYNSPYLSRETYIDIKRNPFKYLNGHQIKMKIYFPGMGYIDNLLKLFKNNHKNIIIDQIEFIAPLILNEGINQCVQTNVNQIEINEYSLNCYYKDIKSNEWVKTCIGNFHISNNLFTQQRNYNINQLINEKCNYSLIERDDLYDMIKIKTGLNYSGDFKGINKCYIGNSCSLSEVSMNLPDNLPDKESFFNCTILDSCTHGFLVLIDYQCQLVFHKVEGLRYYNSNIPTDRNKHKNIYVYSILNQILNDSFHSSVIIMLEDGTVLIEIDNLISKSLTPIQDPLKIEYPMNELFSTHLQPKDSPFPLISMTFKSKFKNINEIKNEFMLNCCKNFISNQFLSNIINRTNIKLNEIKTLTIDQLVKLYCLYNNNERLFRFVFETIKKYDYNSNHSNNENEMVLKDDGIYQVLDTSIKVISKLLFPYENDKEDPITETPTSLFENGLLDKFYGTNNFMTTTIQRNLITDIIINSLKPILNQKLVIRIVELGGGVCSFTVDFLEKLDKLLKENPFHEIEIEFTWSDISSSFIPEAKKKLEPFSNNINIVYRSIDIEKEFKKQGLKHSYFDFIILTNVLHVVKNIGNSLDQLYKILSPNGQILLIEPYVSIVNDSIFGSFSQWWSFEDTEIRKTNCCMEPNSWLQVFKNHNFKNTNSYEEDGSCCYVIHSQKPPLLYGLNELKYTQSPNQIIIYGNENENENENENYTIKFNKSVIKISNIDQFNQSILNSQINNETIIYFTKSINQLDVNNFKFVTFEYIQINKLLLKYKLKSKHVLITLNSRDSNYLSASLVGAKRYFEEYPQLSLKAIDFDLQSLEEIKDIQSLLIELLDENKNTQNDYIIKNCQVYYERVKKEIISKSKFISNSFENNDSLITQLIDSEYKLTSNKPIFKVKEKEEGEEEVEIKVLSTTIGNVNDGDNFGEFSGIITRVCSNSNFKIGEKVYGFGYNTTSSHIVVNGDWIYYKPLNISNNNAASIPYKYLEVLYGLYNIGELDENENILIHLNNNINNNNNNISTLNILKWKGHKGLIYVTVDSNEMEIYVNDNFGGFISGVFILILKCLNSTSRIINFNYLNNNNNDNNDLEFFYKYCRKLNIGYHFIDLKKLIPIRRRGRIIKDLFKEISKAIENNEINLLPIIDYSNLNINHAIQMVKNEKNMVHTIVIENNEDVLENLLKEHSNNSTYSIIKSDYKISENHLGKNLIITGQIGVALEVLKWICKYSKGVENIIILSKSLIKWELKLLIDKTYNSKENNQIKFHFNTIDISNSNELTNTLNQLLKDTNIDNIDSIFHYAFTKVVSEVEDIDLNQLNLSHGAKTMGAINLHNESVNRCWNLKNFINASSTVTLAGSPGQCTYVCANSVLDSLSRYRKSIGLPSICSYYGSIKSGIVLRSESIATSLEKQGYVHVSMNKFLGALDLQIQNPNLSTNLIVSNFNFKLFKNNPQHSIIDKFEHQINENNSKLEISTNNNPSTSTESNKGIDGLLLSKVSELLSINETNFNADITLIDYGADSLITSQLKNFIEKEFSLSVTSQQLQRNSINQLIKFLNKK.

The 440-residue stretch at 8 to 447 (EDDIAIIGVG…GANCCIILSE (440 aa)) folds into the Ketosynthase family 3 (KS3) domain. Residues Cys184, His325, and His363 each act as for beta-ketoacyl synthase activity in the active site. Positions 636 to 669 (GIEASFIVGHSLGEISAAHCSGMIDLETLCYIIY) are acyl/malonyl transferase. The active-site For acyl/malonyl transferase activity is the Ser646. Residues 930–1054 (PPITILGNES…GNFHISNNLF (125 aa)) are N-terminal hotdog fold. A PKS/mFAS DH domain is found at 930 to 1220 (PPITILGNES…SKSLTPIQDP (291 aa)). His964 acts as the Proton acceptor; for dehydratase activity in catalysis. Residues 1071–1220 (NYSLIERDDL…SKSLTPIQDP (150 aa)) are C-terminal hotdog fold. Asp1134 acts as the Proton donor; for dehydratase activity in catalysis. In terms of domain architecture, Carrier spans 2410–2485 (ESNKGIDGLL…NQLIKFLNKK (76 aa)). Ser2447 bears the O-(pantetheine 4'-phosphoryl)serine mark.

It depends on pantetheine 4'-phosphate as a cofactor.

Functionally, probable polyketide synthase. The polypeptide is Probable polyketide synthase 10 (pks10) (Dictyostelium discoideum (Social amoeba)).